Consider the following 356-residue polypeptide: MRVADFSFELPESLIAHYPQPERSGCRLLQLDGPSGELKHGVFTDLLDNLEAGDLLVFNNTRVIPARMFGRKVSGGKIEVLVERVLDDHRVLAHVRASKAPKPGTDLLLGDDESIAATMVARHDTLFELRFNDERDVFTILNAVGHMPLPPYIDRPDEDADRELYQTVYSEKPGAVAAPTAGLHFDEPLLAALREKGIEMAFVTLHVGAGTFQPVRVETIEEHVMHAEYAEVPQEVVDAVLACKARGKRVVAVGTTSVRSLESAANASKEALIAPFFDDTSIFIFPGYHYQVVDALVTNFHLPESTLIMLVSAFAGYKNTMHAYQQAVAEQYRFFSYGDAMFISRNPQAEQESVGA.

The protein belongs to the QueA family. As to quaternary structure, monomer.

The protein localises to the cytoplasm. The enzyme catalyses 7-aminomethyl-7-carbaguanosine(34) in tRNA + S-adenosyl-L-methionine = epoxyqueuosine(34) in tRNA + adenine + L-methionine + 2 H(+). Its pathway is tRNA modification; tRNA-queuosine biosynthesis. Functionally, transfers and isomerizes the ribose moiety from AdoMet to the 7-aminomethyl group of 7-deazaguanine (preQ1-tRNA) to give epoxyqueuosine (oQ-tRNA). The chain is S-adenosylmethionine:tRNA ribosyltransferase-isomerase from Serratia proteamaculans (strain 568).